Consider the following 122-residue polypeptide: Large ribosomal subunit protein uL14 (122 aa).

Belongs to the universal ribosomal protein uL14 family. In terms of assembly, part of the 50S ribosomal subunit. Forms a cluster with proteins L3 and L19. In the 70S ribosome, L14 and L19 interact and together make contacts with the 16S rRNA in bridges B5 and B8.

Its function is as follows. Binds to 23S rRNA. Forms part of two intersubunit bridges in the 70S ribosome. In Carsonella ruddii (strain PV), this protein is Large ribosomal subunit protein uL14.